Here is a 104-residue protein sequence, read N- to C-terminus: Flagellar hook-basal body complex protein FliE (104 aa).

The protein belongs to the FliE family.

It is found in the bacterial flagellum basal body. In Serratia proteamaculans (strain 568), this protein is Flagellar hook-basal body complex protein FliE.